We begin with the raw amino-acid sequence, 143 residues long: Brain ribonuclease (143 aa).

The tract at residues 1 to 21 is disordered; that stretch reads KESAAAKFRRQHMDSGSSSSG. Substrate is bound by residues Lys7 and Arg10. The active-site Proton acceptor is the His12. Disulfide bonds link Cys26–Cys84, Cys40–Cys95, Cys58–Cys110, and Cys65–Cys72. 41–45 lines the substrate pocket; it reads KPVNT. An N-linked (GlcNAc...) asparagine glycan is attached at Asn62. Substrate-binding residues include Lys66 and Arg85. Catalysis depends on His119, which acts as the Proton donor. A glycan (O-linked (GalNAc...) threonine) is linked at Thr129. A glycan (O-linked (GalNAc...) serine) is linked at Ser133.

It belongs to the pancreatic ribonuclease family.

The protein resides in the secreted. In Ovis aries (Sheep), this protein is Brain ribonuclease (BRN).